The sequence spans 370 residues: Mitochondrial carrier protein SCaMC-3L (370 aa).

Solcar repeat units lie at residues 90 to 176 (EALW…CKNY), 184 to 269 (PPFQ…LQCF), and 280 to 367 (PSGL…MKKT). 6 helical membrane passes run 96 to 113 (LLSG…TAPL), 151 to 170 (GNGI…FSVF), 194 to 207 (SLAV…INPM), 245 to 263 (YLPN…LAVY), 282 to 306 (GLVS…LTLV), and 342 to 361 (GMTP…YVVY).

The protein belongs to the mitochondrial carrier (TC 2.A.29) family.

It localises to the mitochondrion inner membrane. It carries out the reaction Mg(2+)(out) + phosphate(in) + ATP(out) = Mg(2+)(in) + phosphate(out) + ATP(in). The enzyme catalyses ADP(out) + phosphate(in) + H(+)(out) = ADP(in) + phosphate(out) + H(+)(in). Functionally, calcium-independent ATP-Mg/Pi exchanger that catalyzes the electroneutral exchange of Mg-ATP or free ADP against an hydrogenphosphate and participates in the net transport of adenine nucleotides across the mitochondria inner membrane. In Homo sapiens (Human), this protein is Mitochondrial carrier protein SCaMC-3L.